Here is a 138-residue protein sequence, read N- to C-terminus: Endoribonuclease YbeY (138 aa).

Positions 106, 110, and 116 each coordinate Zn(2+).

This sequence belongs to the endoribonuclease YbeY family. The cofactor is Zn(2+).

The protein resides in the cytoplasm. Single strand-specific metallo-endoribonuclease involved in late-stage 70S ribosome quality control and in maturation of the 3' terminus of the 16S rRNA. This Phocaeicola vulgatus (strain ATCC 8482 / DSM 1447 / JCM 5826 / CCUG 4940 / NBRC 14291 / NCTC 11154) (Bacteroides vulgatus) protein is Endoribonuclease YbeY.